The chain runs to 66 residues: Cold shock-like protein CspD (66 aa).

The 60-residue stretch at 4 to 63 folds into the CSD domain; it reads GKVKWFNGEKGFGFIEVEGGEDVFVHFSAIQGDGFKTLEEGQEVSFEIVDGNRGPQAANV.

Homodimer.

It is found in the cytoplasm. This Bacillus cereus protein is Cold shock-like protein CspD (cspD).